The chain runs to 160 residues: MGVFNYEIEATSVIPAARLFKAFILDGDNLFPKVAPQAISSVENIEGNGGPGTIKKISFPEGFPFKYVKDRVDEVDHTNFKYSYSVIEGGPVGDTLEKISNEIKIVATPNGGSILKINNKYHTKGDHEVKAEQIKASKEMGETLLRAVESYLLAHSDAYN.

Brassinolide contacts are provided by lysine 55, tyrosine 82, tyrosine 84, and asparagine 101.

Belongs to the BetVI family.

It is found in the cytoplasm. Functionally, may be a general steroid carrier protein. The sequence is that of Major pollen allergen Bet v 1-F/I (BETV1F) from Betula pendula (European white birch).